Consider the following 1010-residue polypeptide: Probable LRR receptor-like serine/threonine-protein kinase At3g47570 (1010 aa).

Residues 1 to 19 form the signal peptide; that stretch reads MRLFLLLAFNALMLLETHG. Residues 20 to 645 are Extracellular-facing; sequence FTDETDRQAL…SSRLKKVVIG (626 aa). Asn48 and Asn88 each carry an N-linked (GlcNAc...) asparagine glycan. LRR repeat units follow at residues 89–113, 114–137, 139–161, 162–185, 186–209, 211–233, 234–258, 259–282, 283–307, and 310–333; these read LSFL…VGQL, SRLE…LYNC, RLLN…LGSL, TNLV…LGNL, TLLE…VAQL, QIWS…LYNL, SSLK…GILL, PNLL…LSNI, STLE…NVPN, and LLFL…TSLT. An N-linked (GlcNAc...) asparagine glycan is attached at Asn136. A glycan (N-linked (GlcNAc...) asparagine) is linked at Asn184. N-linked (GlcNAc...) asparagine glycans are attached at residues Asn221 and Asn232. Residues Asn281 and Asn294 are each glycosylated (N-linked (GlcNAc...) asparagine). N-linked (GlcNAc...) asparagine glycans are attached at residues Asn334 and Asn358. 11 LRR repeats span residues 335-359, 361-384, 385-408, 410-432, 433-455, 457-480, 481-504, 505-528, 530-551, 552-574, and 575-600; these read CTQL…IANL, AKLV…IGNL, INLQ…LGKL, NLRY…IGNM, TMLE…SLGN, SHLL…IMKI, QQLL…IGAL, QNLG…LGNC, TMES…LKGL, VGVK…YFAS, and FSKL…IFEN. 3 N-linked (GlcNAc...) asparagine glycosylation sites follow: Asn431, Asn455, and Asn470. 2 N-linked (GlcNAc...) asparagine glycosylation sites follow: Asn582 and Asn600. A helical membrane pass occupies residues 646 to 666; the sequence is VSVGITLLLLLFMASVTLIWL. Topologically, residues 667 to 1010 are cytoplasmic; that stretch reads RKRKKNKETN…FFKASRTTWR (344 aa). Thr699 carries the post-translational modification Phosphothreonine. A Protein kinase domain is found at 702–1002; that stretch reads FSSSNMVGSG…ELISIRERFF (301 aa). Residues 708–716 and Lys731 contribute to the ATP site; that span reads VGSGSFGTV. Residues Tyr781 and Tyr826 each carry the phosphotyrosine modification. The active-site Proton acceptor is Asp839. Tyr887 bears the Phosphotyrosine mark.

Belongs to the protein kinase superfamily. Ser/Thr protein kinase family.

The protein resides in the cell membrane. It carries out the reaction L-seryl-[protein] + ATP = O-phospho-L-seryl-[protein] + ADP + H(+). The catalysed reaction is L-threonyl-[protein] + ATP = O-phospho-L-threonyl-[protein] + ADP + H(+). The chain is Probable LRR receptor-like serine/threonine-protein kinase At3g47570 from Arabidopsis thaliana (Mouse-ear cress).